The sequence spans 219 residues: Thiopurine S-methyltransferase (219 aa).

Residues tryptophan 10, leucine 45, glutamate 66, and arginine 123 each coordinate S-adenosyl-L-methionine.

This sequence belongs to the class I-like SAM-binding methyltransferase superfamily. TPMT family.

It localises to the cytoplasm. The enzyme catalyses S-adenosyl-L-methionine + a thiopurine = S-adenosyl-L-homocysteine + a thiopurine S-methylether.. The sequence is that of Thiopurine S-methyltransferase from Shewanella pealeana (strain ATCC 700345 / ANG-SQ1).